Consider the following 308-residue polypeptide: MNSFLDIHNTDRSDLRGMIDSARRMKDARSGQPKGTPDADLPLKNRMVALIFEKPSTRTRVSFDLGVRQMGGQTMVLSGKEMQLGHGETIADTARVLSRYVDLIMIRTFEEATLLEMAEYASVPVINGLTNRTHPCQVMADVMTFEEHRGPIAGKKVVWSGDGNNVCCSMIHAAGQFGYDFTFTGPPTLDPEREALDFARAQGVQAVIERDPAKAVEGADLVVTDTWVSMHDPQSARERRHNQLRPYQVNEALMAHAKPDALFMHCLPAHRDDEATSAVMDGPNSVIFDEAENRLHAQKAIMRWCLGL.

Residues 56 to 59 (STRT), Q83, R107, and 134 to 137 (HPCQ) contribute to the carbamoyl phosphate site. Residues N165, D225, and 229 to 230 (SM) contribute to the L-ornithine site. Residues 266 to 267 (CL) and R294 contribute to the carbamoyl phosphate site.

This sequence belongs to the aspartate/ornithine carbamoyltransferase superfamily. OTCase family.

It localises to the cytoplasm. The catalysed reaction is carbamoyl phosphate + L-ornithine = L-citrulline + phosphate + H(+). It participates in amino-acid biosynthesis; L-arginine biosynthesis; L-arginine from L-ornithine and carbamoyl phosphate: step 1/3. Reversibly catalyzes the transfer of the carbamoyl group from carbamoyl phosphate (CP) to the N(epsilon) atom of ornithine (ORN) to produce L-citrulline. The polypeptide is Ornithine carbamoyltransferase (Paracoccus denitrificans (strain Pd 1222)).